The following is a 118-amino-acid chain: UPF0102 protein NE0719 (118 aa).

The protein belongs to the UPF0102 family.

The protein is UPF0102 protein NE0719 of Nitrosomonas europaea (strain ATCC 19718 / CIP 103999 / KCTC 2705 / NBRC 14298).